Reading from the N-terminus, the 62-residue chain is Mastoparan-AF (62 aa).

A signal peptide spans 1–25 (MKNTILILFTAFIALLGFFGMSAEA). 4 AXPX repeats span residues 25–28 (ADPI), 29–32 (ADPI), 33–36 (ADPI), and 43–46 (ADPE). Residues 26–47 (DPIADPIADPISGPNAEADPEA) constitute a propeptide that is removed on maturation. Phenylalanine 61 is modified (phenylalanine amide).

The protein belongs to the MCD family. Mastoparan subfamily. Expressed by the venom gland.

It localises to the secreted. The protein localises to the target cell membrane. Its function is as follows. Antimicrobial and mast cell degranulating peptide. Has broad spectrum antibacterial activity against both Gram-positive and Gram-negative bacteria (S.aureus MIC=16-32 ug/ml, S.xylosus MIC=1.5 ug/ml, S.alactolyticus MIC=8 ug/ml, C.koseri MIC=4 ug/ml, E.coli MIC=4-32 ug/ml, K.pneumoniae MIC=32 ug/ml, P.aerugiosa MIC=96 ug/ml, S.choleraesuis MIC=16 ug/ml, S.typhimurium MIC=32 ug/ml, V.parahamelytics MIC=16 ug/ml). Is also active on multi-antibiotic resistant hemolytic E.coli O157:H7. Acts by affecting membrane permeability. On E.coli O157:H7, acts through multiple membrane disruption patterns, including large perforations (full opening) at apical ends (hollow tubes), vesicle budding, forming dents, and membrane corrugation and invagination leading to irregular pits or pores. Exerts 40% lower membrane permeabilization activities on E.coli O157:H7 than on the non-pathogen E.coli BL21. Shows little hemolytic activities on sheep, chicken and human erythrocytes, but with a higher activity on chicken erythrocytes. Its mast cell degranulation activity may be related to the activation of G-protein coupled receptors in mast cells as well as interaction with other proteins located in cell endosomal membranes in the mast cells. The polypeptide is Mastoparan-AF (Vespa affinis (Lesser banded hornet)).